A 286-amino-acid chain; its full sequence is Bifunctional protein FolD (286 aa).

Residues 164–166 (GTS) and isoleucine 230 contribute to the NADP(+) site.

The protein belongs to the tetrahydrofolate dehydrogenase/cyclohydrolase family. Homodimer.

It catalyses the reaction (6R)-5,10-methylene-5,6,7,8-tetrahydrofolate + NADP(+) = (6R)-5,10-methenyltetrahydrofolate + NADPH. The enzyme catalyses (6R)-5,10-methenyltetrahydrofolate + H2O = (6R)-10-formyltetrahydrofolate + H(+). It functions in the pathway one-carbon metabolism; tetrahydrofolate interconversion. In terms of biological role, catalyzes the oxidation of 5,10-methylenetetrahydrofolate to 5,10-methenyltetrahydrofolate and then the hydrolysis of 5,10-methenyltetrahydrofolate to 10-formyltetrahydrofolate. This is Bifunctional protein FolD from Mesoplasma florum (strain ATCC 33453 / NBRC 100688 / NCTC 11704 / L1) (Acholeplasma florum).